The primary structure comprises 272 residues: MDMKRRIHLELRNRTPAAVQELVLDNCKANDGKIEGLTDEFVNLEFLSLINVGLFSVSDLPKLPKLKKLELSENRIFGGLDRLAEELPSLTHLNLSGNNLKDISTLEPLKRLDCLKSLDLFGCEVTNRSDYRETVFRLLPQLSYLDGYDREDQEAPDSDVEVDSVEEAPDSDGEVDGVDKEEEDEEGEDEEEEEDEDGEEEEDEDEEDEDEDEDVEGEDDEDEVSGEEEEFGHDGEVDEDEEDEDEDEDEEEEESGKGEKRKRETDDEGEDD.

LRR repeat units follow at residues 16–40, 43–64, 65–84, and 89–110; these read PAAVQELVLDNCKANDGKIEGLTDE, NLEFLSLINVGLFSVSDLPKLP, KLKKLELSENRIFGGLDRLA, and SLTHLNLSGNNLKDISTLEPLK. The LRRCT domain occupies 123–161; sequence CEVTNRSDYRETVFRLLPQLSYLDGYDREDQEAPDSDVE. Over residues 149 to 254 the composition is skewed to acidic residues; the sequence is DREDQEAPDS…DEDEDEEEEE (106 aa). The tract at residues 149–272 is disordered; sequence DREDQEAPDS…RETDDEGEDD (124 aa). Ser164 and Ser171 each carry phosphoserine. Residues 255–265 are compositionally biased toward basic and acidic residues; sequence SGKGEKRKRET. The Nuclear localization signal signature appears at 260-263; it reads KRKR. Position 265 is a phosphothreonine (Thr265).

The protein belongs to the ANP32 family. Interacts with histones H3 and H4. Interacts with KLF5; this interaction induces promoter region-specific histone incorporation and inhibition of histone acetylation by ANP32B. Post-translationally, some glutamate residues are glycylated by TTLL8. This modification occurs exclusively on glutamate residues and results in a glycine chain on the gamma-carboxyl group. Directly cleaved by caspase-3/CASP3. In terms of tissue distribution, predominantly expressed in brain. Expressed in the entire embryonic brain, whereas in the adult brain its expression is restricted to the subventricular zone where there are neural progenitor cells.

Its subcellular location is the nucleus. Its function is as follows. Multifunctional protein that is involved in the regulation of many processes including cell proliferation, apoptosis, cell cycle progression or transcription. Regulates the proliferation of neuronal stem cells, differentiation of leukemic cells and progression from G1 to S phase of the cell cycle. As negative regulator of caspase-3-dependent apoptosis, may act as an antagonist of ANP32A in regulating tissue homeostasis. Exhibits histone chaperone properties, able to recruit histones to certain promoters, thus regulating the transcription of specific genes. Also plays an essential role in the nucleocytoplasmic transport of specific mRNAs via the uncommon nuclear mRNA export receptor XPO1/CRM1. Participates in the regulation of adequate adaptive immune responses by acting on mRNA expression and cell proliferation. The sequence is that of Acidic leucine-rich nuclear phosphoprotein 32 family member B (Anp32b) from Rattus norvegicus (Rat).